The chain runs to 370 residues: Nodulation protein Z (370 aa).

Residues 47-361 (SSNDRFVVSR…NDPGRLILIE (315 aa)) enclose the GT23 domain.

Belongs to the glycosyltransferase 23 family.

In terms of biological role, fucosyltransferase which adds the fucose moiety of the nod factor on its terminal reducing N-acetylglucosamine end. Uses GDP-fucose as the donor group. This chain is Nodulation protein Z (nodZ), found in Bradyrhizobium diazoefficiens (strain JCM 10833 / BCRC 13528 / IAM 13628 / NBRC 14792 / USDA 110).